The primary structure comprises 358 residues: F-box/kelch-repeat protein SKIP4 (358 aa).

The region spanning Ala-20–Glu-67 is the F-box domain. Kelch repeat units follow at residues Leu-78–Lys-122, Arg-123–Gly-171, Ile-173–Gly-219, Arg-220–Gln-269, Phe-271–Asn-307, and Ser-308–Ser-355.

As to quaternary structure, part of a SCF (SKP1-cullin-F-box) protein ligase complex. Interacts with SKP1A/ASK1.

It participates in protein modification; protein ubiquitination. This is F-box/kelch-repeat protein SKIP4 (SKIP4) from Arabidopsis thaliana (Mouse-ear cress).